The following is a 164-amino-acid chain: Cyclic pyranopterin monophosphate synthase (164 aa).

Residues 73 to 75 (LCH) and 111 to 112 (ME) each bind substrate. Aspartate 126 is a catalytic residue.

This sequence belongs to the MoaC family. Homohexamer; trimer of dimers.

It carries out the reaction (8S)-3',8-cyclo-7,8-dihydroguanosine 5'-triphosphate = cyclic pyranopterin phosphate + diphosphate. Its pathway is cofactor biosynthesis; molybdopterin biosynthesis. Functionally, catalyzes the conversion of (8S)-3',8-cyclo-7,8-dihydroguanosine 5'-triphosphate to cyclic pyranopterin monophosphate (cPMP). The sequence is that of Cyclic pyranopterin monophosphate synthase from Herpetosiphon aurantiacus (strain ATCC 23779 / DSM 785 / 114-95).